A 359-amino-acid polypeptide reads, in one-letter code: Glutamine synthetase (359 aa).

The GS beta-grasp domain occupies V28–G107. The GS catalytic domain maps to H114–H359. The residue at position 273 (S273) is a Phosphoserine. Position 303 is a phosphothreonine (T303). The residue at position 305 (S305) is a Phosphoserine.

The protein belongs to the glutamine synthetase family. As to quaternary structure, homooctamer.

Its subcellular location is the cytoplasm. It catalyses the reaction L-glutamate + NH4(+) + ATP = L-glutamine + ADP + phosphate + H(+). The protein is Glutamine synthetase (gln1) of Schizosaccharomyces pombe (strain 972 / ATCC 24843) (Fission yeast).